The primary structure comprises 86 residues: Small ribosomal subunit protein uS17 (86 aa).

The protein belongs to the universal ribosomal protein uS17 family. Part of the 30S ribosomal subunit.

One of the primary rRNA binding proteins, it binds specifically to the 5'-end of 16S ribosomal RNA. The sequence is that of Small ribosomal subunit protein uS17 from Desulfotalea psychrophila (strain LSv54 / DSM 12343).